A 298-amino-acid polypeptide reads, in one-letter code: Movement protein BC1 (298 aa).

It belongs to the begomovirus movement protein BC1 family. Binds to dimeric supercoiled plasmid DNA. Post-translationally, phosphorylated.

The protein localises to the host cell membrane. The protein resides in the host microsome membrane. Its subcellular location is the host endoplasmic reticulum membrane. Its function is as follows. Transports viral genome to neighboring plant cells directly through plasmosdesmata, without any budding. The movement protein allows efficient cell to cell propagation, by bypassing the host cell wall barrier. Begomovirus genome is shuttled out of nucleus by Nuclear shuttle protein (NSP) and the movement protein transports the DNA-NSP complex to cell plasmodesmata and facilitates further movement across the cell wall. In Mungbean yellow mosaic virus (strain Vigna) (MYMV), this protein is Movement protein BC1.